The sequence spans 962 residues: Villin-5 (962 aa).

Gelsolin-like repeat units lie at residues 29-79 (FKPV…DEAG), 150-190 (VRVK…QERA), 262-305 (GQTD…DQRK), 396-453 (LQVW…EDRA), 534-574 (MQAI…EDQE), and 636-677 (LKAT…KKKP). The segment at 749-785 (KPKRRVPAYSSRSTVPDKSQPRSRSMTFSPDRARVRG) is disordered. The segment covering 758-776 (SSRSTVPDKSQPRSRSMTF) has biased composition (polar residues). Phosphoserine is present on residues Ser777 and Ser787. Residues 845–862 (EKPTPTSQEPPTSPSSSE) are compositionally biased toward low complexity. Residues 845-917 (EKPTPTSQEP…LKTDSEDPVS (73 aa)) form a disordered region. The segment covering 863 to 875 (ATNQAEAPKSTSE) has biased composition (polar residues). At Ser883 the chain carries Phosphoserine. A compositionally biased stretch (acidic residues) spans 889–898 (SKEEEAEEES). An HP domain is found at 897–962 (ESSLPTFPYE…NKLKMSVNLF (66 aa)).

It belongs to the villin/gelsolin family. In terms of tissue distribution, ubiquitous, but expressed preferentially in pollen and stamens.

The protein resides in the cytoplasm. Its subcellular location is the cytoskeleton. Its function is as follows. Major actin filament stabilizing factor and regulator of actin dynamics. Binds actin and actin filament bundles in a Ca(2+)-insensitive manner, but caps the barbed end of actin filaments and is able to sever them in a calcium-dependent manner. Required for the construction of actin collars in pollen tubes. Acts synergistically with VLN2 (AC O81644) to regulate polarized pollen tube growth. This chain is Villin-5, found in Arabidopsis thaliana (Mouse-ear cress).